A 590-amino-acid polypeptide reads, in one-letter code: Leucine-rich repeat transmembrane neuronal protein 4 (590 aa).

The first 30 residues, 1–30, serve as a signal peptide directing secretion; it reads MGFRLITQLKGMSVLLVLFPTLLLVMLTGA. The LRRNT domain maps to 31–59; that stretch reads QRACPKNCRCDGKIVYCESHAFADIPENI. The Extracellular portion of the chain corresponds to 31–424; that stretch reads QRACPKNCRC…HEYEHVSFHK (394 aa). Asn58 is a glycosylation site (N-linked (GlcNAc...) asparagine). LRR repeat units follow at residues 60–83, 84–107, 108–131, 132–155, 157–179, 180–203, 205–227, 228–251, 252–275, and 276–299; these read SGGSQGLSLRFNSIQKLKSNQFAG, LNQLIWLYLDHNYISSVDEDAFQG, IRRLKELILSSNKITYLHNKTFHP, VPNLRNLDLSYNKLQTLQSEQFKG, RKLIILHLRSNSLKTVPIRVFQD, CRNLDFLDLGYNRLRSLSRNAFAG, LKLKELHLEHNQFSKINFAHFPR, LFNLRSIYLQWNRIRSVSQGLTWT, WSSLHTLDLSGNDIQAIEPGTFKC, and LPNLQKLNLDSNKLTNVSQETVNA. A glycan (N-linked (GlcNAc...) asparagine) is linked at Asn126. Asn291 carries N-linked (GlcNAc...) asparagine glycosylation. Positions 311–362 constitute an LRRCT domain; that stretch reads NMWECSRSICPLFYWLKNFKGNKESTMICAGPKHIQGEKVSDAVETYNICSD. A helical transmembrane segment spans residues 425–445; the sequence is IIAGSVALFLSVAMILLVIYV. At 446–590 the chain is on the cytoplasmic side; it reads SWKRYPASMK…PAIYLERITN (145 aa).

It belongs to the LRRTM family. Peripherally associated with AMPAR complex. AMPAR complex consists of an inner core made of 4 pore-forming GluA/GRIA proteins (GRIA1, GRIA2, GRIA3 and GRIA4) and 4 major auxiliary subunits arranged in a twofold symmetry. One of the two pairs of distinct binding sites is occupied either by CNIH2, CNIH3 or CACNG2, CACNG3. The other harbors CACNG2, CACNG3, CACNG4, CACNG8 or GSG1L. This inner core of AMPAR complex is complemented by outer core constituents binding directly to the GluA/GRIA proteins at sites distinct from the interaction sites of the inner core constituents. Outer core constituents include at least PRRT1, PRRT2, CKAMP44/SHISA9, FRRS1L and NRN1. The proteins of the inner and outer core serve as a platform for other, more peripherally associated AMPAR constituents, including LRRTM4. Alone or in combination, these auxiliary subunits control the gating and pharmacology of the AMPAR complex and profoundly impact their biogenesis and protein processing. As to expression, expressed in the brain (at protein level).

It localises to the cell membrane. The protein localises to the postsynaptic cell membrane. Its function is as follows. May play a role in the development and maintenance of the nervous system. Exhibits strong synaptogenic activity, restricted to excitatory presynaptic differentiation. This chain is Leucine-rich repeat transmembrane neuronal protein 4 (Lrrtm4), found in Rattus norvegicus (Rat).